The sequence spans 188 residues: Elongation factor P-like protein (188 aa).

Belongs to the elongation factor P family.

The protein is Elongation factor P-like protein of Alcanivorax borkumensis (strain ATCC 700651 / DSM 11573 / NCIMB 13689 / SK2).